A 34-amino-acid polypeptide reads, in one-letter code: DDIT3 upstream open reading frame protein (34 aa).

Interacts with DDIT3 (isoform 1).

It is found in the nucleus. The protein localises to the cytoplasm. Functionally, product of the upstream open reading frame (uORF) of DDIT3/CHOP that is specifically produced in absence of stress, thereby preventing translation of downstream stress effector DDIT3/CHOP. This is DDIT3 upstream open reading frame protein from Homo sapiens (Human).